Reading from the N-terminus, the 61-residue chain is MAKKSMIAKQQRTPKFKVQEYTRCERCGRPHSVIRKFKLCRICFRELAYKGQIPGVKKASW.

Zn(2+) contacts are provided by C24, C27, C40, and C43.

Belongs to the universal ribosomal protein uS14 family. Zinc-binding uS14 subfamily. As to quaternary structure, part of the 30S ribosomal subunit. Contacts proteins S3 and S10. Requires Zn(2+) as cofactor.

Its function is as follows. Binds 16S rRNA, required for the assembly of 30S particles and may also be responsible for determining the conformation of the 16S rRNA at the A site. This chain is Small ribosomal subunit protein uS14B, found in Bacillus velezensis (strain DSM 23117 / BGSC 10A6 / LMG 26770 / FZB42) (Bacillus amyloliquefaciens subsp. plantarum).